The chain runs to 989 residues: Phosphoenolpyruvate carboxylase (989 aa).

Active-site residues include histidine 175 and lysine 630.

Belongs to the PEPCase type 1 family. It depends on Mg(2+) as a cofactor.

The catalysed reaction is oxaloacetate + phosphate = phosphoenolpyruvate + hydrogencarbonate. In terms of biological role, forms oxaloacetate, a four-carbon dicarboxylic acid source for the tricarboxylic acid cycle. In Prochlorococcus marinus (strain MIT 9515), this protein is Phosphoenolpyruvate carboxylase.